A 381-amino-acid chain; its full sequence is Complement decay-accelerating factor (381 aa).

The first 34 residues, 1–34 (MTVARPSVPAALPLLGELPRLLLLVLLCLPAVWG), serve as a signal peptide directing secretion. Sushi domains are found at residues 35 to 96 (DCGL…FCNR), 96 to 160 (RSCE…FCKK), 161 to 222 (KSCP…ECRE), and 223 to 285 (IYCP…ECRG). Intrachain disulfides connect C36–C81 and C65–C94. A glycan (N-linked (GlcNAc...) asparagine) is linked at N95. Intrachain disulfides connect C98-C145, C129-C158, C163-C204, C190-C220, C225-C267, and C253-C283. The interval 277 to 354 (SGPPPECRGK…PNKGSGTTSG (78 aa)) is disordered. A compositionally biased stretch (polar residues) spans 287-309 (SLTSKVPPTVQKPTTVNVPTTEV). A compositionally biased stretch (low complexity) spans 310 to 328 (SPTSQKTTTKTTTPNAQAT). The GPI-anchor amidated serine moiety is linked to residue S353. Positions 354 to 381 (GTTRLLSGHTCFTLTGLLGTLVTMGLLT) are cleaved as a propeptide — removed in mature form.

It belongs to the receptors of complement activation (RCA) family. Monomer (major form) and non-disulfide-linked, covalent homodimer (minor form). Interacts with ADGRE5. As to quaternary structure, (Microbial infection) Interacts with coxsackievirus A21, coxsackieviruses B1, B3 and B5 capsid proteins. In terms of assembly, (Microbial infection) Interacts with human enterovirus 70 and D68 capsid proteins. (Microbial infection) Interacts with human echoviruses 6, 7, 11, 12, 20 and 21 capsid proteins. Post-translationally, the Ser/Thr-rich domain is heavily O-glycosylated. In terms of tissue distribution, expressed on the plasma membranes of all cell types that are in intimate contact with plasma complement proteins. It is also found on the surfaces of epithelial cells lining extracellular compartments, and variants of the molecule are present in body fluids and in extracellular matrix.

The protein resides in the cell membrane. The protein localises to the secreted. This protein recognizes C4b and C3b fragments that condense with cell-surface hydroxyl or amino groups when nascent C4b and C3b are locally generated during C4 and c3 activation. Interaction of daf with cell-associated C4b and C3b polypeptides interferes with their ability to catalyze the conversion of C2 and factor B to enzymatically active C2a and Bb and thereby prevents the formation of C4b2a and C3bBb, the amplification convertases of the complement cascade. Inhibits complement activation by destabilizing and preventing the formation of C3 and C5 convertases, which prevents complement damage. Functionally, (Microbial infection) Acts as a receptor for Coxsackievirus A21, coxsackieviruses B1, B3 and B5. In terms of biological role, (Microbial infection) Acts as a receptor for Human enterovirus 70 and D68. Its function is as follows. (Microbial infection) Acts as a receptor for Human echoviruses 6, 7, 11, 12, 20 and 21. This is Complement decay-accelerating factor (CD55) from Homo sapiens (Human).